Consider the following 211-residue polypeptide: uncharacterized protein (211 aa).

The first 27 residues, Met-1–Val-27, serve as a signal peptide directing secretion.

This is an uncharacterized protein from Archaeoglobus fulgidus (strain ATCC 49558 / DSM 4304 / JCM 9628 / NBRC 100126 / VC-16).